A 241-amino-acid chain; its full sequence is MSMLFYTLITAFLIGIQAEPHSESNVPAGHTIPQAHWTKLQHSLDTALRRARSAPAAAIAARVAGQTRNITVDPRLFKKRRLRSPRVLFSTQPPREAADTQDLDFEVGGAAPFNRTHRSKRSSSHPIFHRGEFSVCDSVSVWVGDKTTATDIKGKEVMVLGEVNINNSVFKQYFFETKCRDPNPVDSGCRGIDSKHWNSYCTTTHTFVKALTMDGKQAAWRFIRIDTACVCVLSRKAVRRA.

An N-terminal signal peptide occupies residues 1–18; it reads MSMLFYTLITAFLIGIQA. Positions 19 to 121 are excised as a propeptide; it reads EPHSESNVPA…PFNRTHRSKR (103 aa). N-linked (GlcNAc...) asparagine glycosylation is found at N69 and N114. 3 disulfide bridges follow: C136–C201, C179–C229, and C189–C231. Positions 173 and 209 each coordinate a 1-acyl-sn-glycero-3-phospho-(1D-myo-inositol). K209 provides a ligand contact to a 1-acyl-sn-glycero-3-phospho-L-serine.

This sequence belongs to the NGF-beta family. Homodimer. The homodimer interacts with a single NTRK1 chain. The homodimer interacts with a single NGFR chain. The NGF dimer interacts with a single SORCS2 chain (via extracellular domain). The NGF precursor (proNGF) binds to a receptor complex formed by SORT1 and NGFR, which leads to NGF endocytosis. Both mature NGF and the immature NGF precursor (proNGF) interact with SORCS2 and with the heterodimer formed by SORCS2 and NGFR (via extracellular domains). The NGF precursor (proNGF) has much higher affinity for SORCS2 than mature NGF. The NGF precursor (proNGF) has much higher affinity for SORT1 than mature NGF. Interacts with ADAM10 in a divalent cation-dependent manner. Interaction with SORCS3.

The protein localises to the secreted. Its subcellular location is the endosome lumen. Its function is as follows. Nerve growth factor is important for the development and maintenance of the sympathetic and sensory nervous systems. Extracellular ligand for the NTRK1 and NGFR receptors, activates cellular signaling cascades to regulate neuronal proliferation, differentiation and survival. The immature NGF precursor (proNGF) functions as a ligand for the heterodimeric receptor formed by SORCS2 and NGFR, and activates cellular signaling cascades that lead to inactivation of RAC1 and/or RAC2, reorganization of the actin cytoskeleton and neuronal growth cone collapse. In contrast to mature NGF, the precursor form (proNGF) promotes neuronal apoptosis (in vitro). Inhibits metalloproteinase-dependent proteolysis of platelet glycoprotein VI. Binds lysophosphatidylinositol and lysophosphatidylserine between the two chains of the homodimer. The lipid-bound form promotes histamine relase from mast cells, contrary to the lipid-free form. The chain is Beta-nerve growth factor (NGF) from Homo sapiens (Human).